Here is a 351-residue protein sequence, read N- to C-terminus: Protein Wnt-4 (351 aa).

The first 22 residues, 1-22 (MSPRSCLRSLRLLVFAVFSAAA), serve as a signal peptide directing secretion. 11 cysteine pairs are disulfide-bonded: cysteine 78–cysteine 89, cysteine 128–cysteine 136, cysteine 138–cysteine 155, cysteine 206–cysteine 220, cysteine 208–cysteine 215, cysteine 280–cysteine 311, cysteine 296–cysteine 306, cysteine 310–cysteine 350, cysteine 326–cysteine 341, cysteine 328–cysteine 338, and cysteine 333–cysteine 334. Residue asparagine 88 is glycosylated (N-linked (GlcNAc...) asparagine). Serine 212 is lipidated: O-palmitoleoyl serine; by PORCN. Asparagine 297 carries N-linked (GlcNAc...) asparagine glycosylation.

It belongs to the Wnt family. In terms of assembly, interacts with PORCN. Interacts with PKD1. In terms of processing, palmitoleoylation is required for efficient binding to frizzled receptors. Depalmitoleoylation leads to Wnt signaling pathway inhibition. As to expression, in adults in lung and brain.

It is found in the secreted. The protein localises to the extracellular space. It localises to the extracellular matrix. Ligand for members of the frizzled family of seven transmembrane receptors. Plays an important role in the embryonic development of the urogenital tract and the lung. Required for normal mesenchyme to epithelium transition during embryonic kidney development. Required for the formation of early epithelial renal vesicles during kidney development. Required for normal formation of the Mullerian duct in females, and normal levels of oocytes in the ovaries. Required for normal down-regulation of 3 beta-hydroxysteroid dehydrogenase in the ovary. Required for normal lung development and for normal patterning of trachael cartilage rings. The chain is Protein Wnt-4 (Wnt4) from Mus musculus (Mouse).